Here is a 312-residue protein sequence, read N- to C-terminus: Putative endonuclease 4 (312 aa).

Positions 84, 127, 166, 202, 205, 239, 252, 254, and 284 each coordinate Zn(2+).

Belongs to the AP endonuclease 2 family. The cofactor is Zn(2+).

The enzyme catalyses Endonucleolytic cleavage to 5'-phosphooligonucleotide end-products.. In terms of biological role, endonuclease IV plays a role in DNA repair. It cleaves phosphodiester bonds at apurinic or apyrimidinic sites (AP sites) to produce new 5'-ends that are base-free deoxyribose 5-phosphate residues. The sequence is that of Putative endonuclease 4 from Acanthamoeba polyphaga (Amoeba).